Consider the following 596-residue polypeptide: tRNA(Met) cytidine acetyltransferase TmcA (596 aa).

Residues Gln-138, 160-169 (GRGKSTLAGK), and Arg-285 contribute to the ATP site. The N-acetyltransferase domain occupies 328-481 (SDLRRLFDAQ…SGYHSAMMLY (154 aa)). Acetyl-CoA-binding positions include 406–408 (IAV) and 413–419 (QKQGIGK).

The protein belongs to the RNA cytidine acetyltransferase family. TmcA subfamily.

The protein resides in the cytoplasm. The enzyme catalyses cytidine(34) in elongator tRNA(Met) + acetyl-CoA + ATP + H2O = N(4)-acetylcytidine(34) in elongator tRNA(Met) + ADP + phosphate + CoA + H(+). Catalyzes the formation of N(4)-acetylcytidine (ac(4)C) at the wobble position of tRNA(Met), by using acetyl-CoA as an acetyl donor and ATP (or GTP). In Actinobacillus pleuropneumoniae serotype 5b (strain L20), this protein is tRNA(Met) cytidine acetyltransferase TmcA.